The sequence spans 271 residues: Isoprenyl transferase (271 aa).

Residue Asp-35 is part of the active site. Position 35 (Asp-35) interacts with Mg(2+). Substrate-binding positions include Gly-36–Arg-39, Trp-40, Arg-48, His-52, and Ser-80–Glu-82. The active-site Proton acceptor is the Asn-83. Substrate-binding positions include Trp-84, Arg-86, Arg-207, and Arg-213–Ser-215. Mg(2+) is bound at residue Glu-226.

It belongs to the UPP synthase family. As to quaternary structure, homodimer. Mg(2+) serves as cofactor.

Functionally, catalyzes the condensation of isopentenyl diphosphate (IPP) with allylic pyrophosphates generating different type of terpenoids. The polypeptide is Isoprenyl transferase (Enterococcus faecalis (strain ATCC 700802 / V583)).